Here is a 263-residue protein sequence, read N- to C-terminus: Putative S-adenosyl-L-methionine-dependent methyltransferase Mkms_0098 (263 aa).

Residues aspartate 121 and glutamate 150–serine 151 contribute to the S-adenosyl-L-methionine site.

This sequence belongs to the UPF0677 family.

Functionally, exhibits S-adenosyl-L-methionine-dependent methyltransferase activity. The protein is Putative S-adenosyl-L-methionine-dependent methyltransferase Mkms_0098 of Mycobacterium sp. (strain KMS).